Consider the following 193-residue polypeptide: dCTP deaminase (193 aa).

DCTP-binding positions include 110 to 115 (RSSLAR), Asp128, 136 to 138 (VLE), Tyr171, Lys178, and Gln182. Glu138 acts as the Proton donor/acceptor in catalysis. The segment at 169–193 (RPYNRRQDAKYKDQQGAVASRIDKD) is disordered.

Belongs to the dCTP deaminase family. In terms of assembly, homotrimer.

The enzyme catalyses dCTP + H2O + H(+) = dUTP + NH4(+). It functions in the pathway pyrimidine metabolism; dUMP biosynthesis; dUMP from dCTP (dUTP route): step 1/2. In terms of biological role, catalyzes the deamination of dCTP to dUTP. The polypeptide is dCTP deaminase (Pectobacterium carotovorum subsp. carotovorum (strain PC1)).